The following is a 161-amino-acid chain: Phosphopantetheine adenylyltransferase (161 aa).

Belongs to the eukaryotic CoaD family.

The protein localises to the cytoplasm. The catalysed reaction is (R)-4'-phosphopantetheine + ATP + H(+) = 3'-dephospho-CoA + diphosphate. It functions in the pathway cofactor biosynthesis; coenzyme A biosynthesis. Its function is as follows. Reversibly transfers an adenylyl group from ATP to 4'-phosphopantetheine, yielding dephospho-CoA (dPCoA) and pyrophosphate. The sequence is that of Phosphopantetheine adenylyltransferase from Methanosarcina barkeri (strain Fusaro / DSM 804).